A 506-amino-acid polypeptide reads, in one-letter code: MRGDRMSKAPRTAISPTREENYPEWYQQVIRAADLAENSPVRGCMVIKPWGYQLWENVQRALDDMFKATGHQNAYFPLFIPMSFLEKEAEHVEGFAKECAVVTHHRLEPDPDGGLRPAGKLEEPLIVRPTSETIIGATYAKWVQSYRDLPILINQWANVVRWEMRTRMFLRTAEFLWQEGHTVHATSEEAVEETEKMVEVYRDFAENWMAMPVIVGSKTPLERFPGAVETLSIEAMMQDRKALQAGTSHFLGQNFSKAQEIKFQSESGDIEFAWTTSWGVSTRLIGALIMTHSDDDGLVLPPRLAPTHVVIQPIYKDDSRAEVMEYVQSLRDELAAQTYANAPVRVTIDDRDIRGGEKKWYHVKRGVPIRLEVGPKDIAAGTVFCGIRNQPKSVGIDRAELVATIGEKLATLQQELFDAALKMREDNTVELTSEAEFRDFFADKGDTAITGGFAWCHYCDEDSLQPLLKELKVTIRCVPRSDNATEGTCFLTGKPAAQRAIFAKAY.

The protein belongs to the class-II aminoacyl-tRNA synthetase family. ProS type 3 subfamily. As to quaternary structure, homodimer.

Its subcellular location is the cytoplasm. The catalysed reaction is tRNA(Pro) + L-proline + ATP = L-prolyl-tRNA(Pro) + AMP + diphosphate. In terms of biological role, catalyzes the attachment of proline to tRNA(Pro) in a two-step reaction: proline is first activated by ATP to form Pro-AMP and then transferred to the acceptor end of tRNA(Pro). The sequence is that of Proline--tRNA ligase from Rhodopirellula baltica (strain DSM 10527 / NCIMB 13988 / SH1).